The sequence spans 560 residues: DNA ligase B (560 aa).

Lys-124 serves as the catalytic N6-AMP-lysine intermediate.

This sequence belongs to the NAD-dependent DNA ligase family. LigB subfamily.

The enzyme catalyses NAD(+) + (deoxyribonucleotide)n-3'-hydroxyl + 5'-phospho-(deoxyribonucleotide)m = (deoxyribonucleotide)n+m + AMP + beta-nicotinamide D-nucleotide.. Functionally, catalyzes the formation of phosphodiester linkages between 5'-phosphoryl and 3'-hydroxyl groups in double-stranded DNA using NAD as a coenzyme and as the energy source for the reaction. The sequence is that of DNA ligase B from Shigella flexneri.